Here is a 444-residue protein sequence, read N- to C-terminus: Glutamyl-tRNA reductase (444 aa).

Substrate is bound by residues 49 to 52, Ser109, 114 to 116, and Gln120; these read TCNR and ETQ. The active-site Nucleophile is Cys50. An NADP(+)-binding site is contributed by 189-194; the sequence is GAGKMG.

It belongs to the glutamyl-tRNA reductase family. In terms of assembly, homodimer.

The enzyme catalyses (S)-4-amino-5-oxopentanoate + tRNA(Glu) + NADP(+) = L-glutamyl-tRNA(Glu) + NADPH + H(+). Its pathway is porphyrin-containing compound metabolism; protoporphyrin-IX biosynthesis; 5-aminolevulinate from L-glutamyl-tRNA(Glu): step 1/2. Its function is as follows. Catalyzes the NADPH-dependent reduction of glutamyl-tRNA(Glu) to glutamate 1-semialdehyde (GSA). This is Glutamyl-tRNA reductase from Bacillus cereus (strain ATCC 14579 / DSM 31 / CCUG 7414 / JCM 2152 / NBRC 15305 / NCIMB 9373 / NCTC 2599 / NRRL B-3711).